The chain runs to 793 residues: Probable phosphoketolase (793 aa).

Belongs to the XFP family. The cofactor is thiamine diphosphate.

In Streptomyces avermitilis (strain ATCC 31267 / DSM 46492 / JCM 5070 / NBRC 14893 / NCIMB 12804 / NRRL 8165 / MA-4680), this protein is Probable phosphoketolase.